The primary structure comprises 239 residues: DNA repair protein RecO (239 aa).

Belongs to the RecO family.

Involved in DNA repair and RecF pathway recombination. In Bifidobacterium animalis subsp. lactis (strain AD011), this protein is DNA repair protein RecO.